Consider the following 198-residue polypeptide: Putative pseudouridine methyltransferase (198 aa).

S-adenosyl-L-methionine-binding residues include M132 and C186.

Belongs to the methyltransferase superfamily. TrmY family.

Its subcellular location is the cytoplasm. This is Putative pseudouridine methyltransferase from Photobacterium profundum (strain SS9).